A 956-amino-acid polypeptide reads, in one-letter code: Phosphatidylinositol 4-kinase PIK1a (956 aa).

The PIK helical domain maps to 1-120; that stretch reads MPVAPHELRD…QTVRKFINKL (120 aa). Residues 545–573 form a disordered region; it reads SRDWAKSTPGSPVARSSQEDEKFYGNVSS. Residues 658–939 enclose the PI3K/PI4K catalytic domain; that stretch reads EDWNEKKHRI…YLIEKSVGSM (282 aa). The tract at residues 664–670 is G-loop; that stretch reads KHRIRKS. Residues 805 to 813 are catalytic loop; it reads QIKDRHNGN. Residues 824–848 form an activation loop region; it reads HIDFGFLLSNSPGSVGFEAAPFKLT.

Belongs to the PI3/PI4-kinase family. Type III PI4K subfamily.

The protein localises to the nucleus. The enzyme catalyses a 1,2-diacyl-sn-glycero-3-phospho-(1D-myo-inositol) + ATP = a 1,2-diacyl-sn-glycero-3-phospho-(1D-myo-inositol 4-phosphate) + ADP + H(+). Functionally, acts on phosphatidylinositol (PI) in the first committed step in the production of the second messenger inositol 1,4,5,-trisphosphate. This chain is Phosphatidylinositol 4-kinase PIK1a (PIKA), found in Candida albicans (strain SC5314 / ATCC MYA-2876) (Yeast).